The sequence spans 292 residues: MNPLWSMSAGSVRKRAEGEEKTLAGDVKTSPPRSAPKKQLPSIPKNALPIAKPTSPAPAAQSTNGTHASYGPFYLEYSLLAEFTLVVKQKLPGVYVQPSYRSALVWFGVIFIRHGLYQDGVFKFTVYIPDNYPDGDCPRLLFDIPVFHPLVDPTSGELDVKRAFAKWRRNHNHIWQVLMYARRVFYKIDTTSPLNPEAAVLYEKDIQLFKSKVVDSVKVCTARLFDQPKIEDPYAISFSPWNPSVHDEAREKMLTQKKPDEQHNKSVHVAGLSWVKPGSVQPFSKEEKTVAT.

The segment at 1-63 (MNPLWSMSAG…TSPAPAAQST (63 aa)) is disordered. Over residues 14 to 23 (KRAEGEEKTL) the composition is skewed to basic and acidic residues. Ser-30 carries the phosphoserine modification. The UBC core domain occupies 74–222 (YLEYSLLAEF…VVDSVKVCTA (149 aa)).

It belongs to the ubiquitin-conjugating enzyme family. FTS subfamily. In terms of assembly, component of the FTS/Hook/FHIP complex (FHF complex), composed of AKTIP/FTS, FHIP1B, and one or more members of the Hook family of proteins HOOK1, HOOK2, and HOOK3. Interacts directly with HOOK1, HOOK2 and HOOK3. The FHF complex associates with the homotypic vesicular sorting complex (the HOPS complex). Also interacts with AKT1. May interact with FHIP1A. As to expression, ubiquitous. Highest expression in kidney, testis and brain and lowest in spleen and liver.

The protein resides in the cytoplasm. It is found in the cell membrane. Its function is as follows. Component of the FTS/Hook/FHIP complex (FHF complex). The FHF complex may function to promote vesicle trafficking and/or fusion via the homotypic vesicular protein sorting complex (the HOPS complex). Regulates apoptosis by enhancing phosphorylation and activation of AKT1. Increases release of TNFSF6 via the AKT1/GSK3B/NFATC1 signaling cascade. FHF complex promotes the distribution of AP-4 complex to the perinuclear area of the cell. The chain is AKT-interacting protein (Aktip) from Mus musculus (Mouse).